A 399-amino-acid polypeptide reads, in one-letter code: Dual specificity mitogen-activated protein kinase kinase 4 (399 aa).

Residues 1–40 (MAAPSPSGGGGSGGGSGSGTPGPVGSPAPGHPAVSSMQGK) are disordered. A2 carries the post-translational modification N-acetylalanine. Over residues 7-22 (SGGGGSGGGSGSGTPG) the composition is skewed to gly residues. The segment at 37-52 (MQGKRKALKLNFANPP) is d domain. R58 carries the post-translational modification Asymmetric dimethylarginine; alternate. R58 bears the Omega-N-methylarginine; alternate mark. S90 carries the phosphoserine modification. The Protein kinase domain occupies 102–367 (LKDLGEIGRG…YKELLKHPFI (266 aa)). ATP contacts are provided by residues 108-116 (IGRGAYGSV) and K131. The active-site Proton acceptor is the D229. S257 is subject to Phosphoserine; by MAP3K. T261 is subject to Phosphothreonine; by MAP3K. The segment at 364-387 (HPFILMYEERAVEVACYVCKILDQ) is DVD domain.

The protein belongs to the protein kinase superfamily. STE Ser/Thr protein kinase family. MAP kinase kinase subfamily. As to quaternary structure, interacts with SPAG9. Interacts (via its D domain) with its substrates MAPK8/JNK1, MAPK9/JNK2, MAPK10/JNK3, MAPK11 and MAPK14. Interacts (via its DVD domain) with MAP3Ks activators like MAP3K1/MEKK1 and MAP3K11/MLK3. Interacts with ARRB1, ARRB2 and MAPK8IP3/JIP3. Post-translationally, activated by phosphorylation on Ser-257 and Thr-261 by MAP kinase kinase kinases (MAP3Ks). As to expression, abundant expression is seen in the skeletal muscle. It is also widely expressed in other tissues.

Its subcellular location is the cytoplasm. It localises to the nucleus. It catalyses the reaction L-seryl-[protein] + ATP = O-phospho-L-seryl-[protein] + ADP + H(+). The enzyme catalyses L-threonyl-[protein] + ATP = O-phospho-L-threonyl-[protein] + ADP + H(+). The catalysed reaction is L-tyrosyl-[protein] + ATP = O-phospho-L-tyrosyl-[protein] + ADP + H(+). Its activity is regulated as follows. Activated in response to a variety of cellular stresses, including UV and gamma-irradiation, heat shock, hyperosmolarity, T-cell receptor stimulation, peroxide and inflammatory cytokines. Also activated by developmental cues. MAP2K4/MKK4 is activated by the majority of MKKKs, such as MAP3K5/ASK1, MAP3K1/MEKK1, MAP3K7/TAK1, MAP3K10/MLK2, MAP3K11/MLK3, MAP3K12/DLK and MAP3K13/LZK. In terms of biological role, dual specificity protein kinase which acts as an essential component of the MAP kinase signal transduction pathway. Essential component of the stress-activated protein kinase/c-Jun N-terminal kinase (SAP/JNK) signaling pathway. With MAP2K7/MKK7, is the one of the only known kinase to directly activate the stress-activated protein kinase/c-Jun N-terminal kinases MAPK8/JNK1, MAPK9/JNK2 and MAPK10/JNK3. MAP2K4/MKK4 and MAP2K7/MKK7 both activate the JNKs by phosphorylation, but they differ in their preference for the phosphorylation site in the Thr-Pro-Tyr motif. MAP2K4 shows preference for phosphorylation of the Tyr residue and MAP2K7/MKK7 for the Thr residue. The phosphorylation of the Thr residue by MAP2K7/MKK7 seems to be the prerequisite for JNK activation at least in response to pro-inflammatory cytokines, while other stimuli activate both MAP2K4/MKK4 and MAP2K7/MKK7 which synergistically phosphorylate JNKs. MAP2K4 is required for maintaining peripheral lymphoid homeostasis. The MKK/JNK signaling pathway is also involved in mitochondrial death signaling pathway, including the release cytochrome c, leading to apoptosis. Whereas MAP2K7/MKK7 exclusively activates JNKs, MAP2K4/MKK4 additionally activates the p38 MAPKs MAPK11, MAPK12, MAPK13 and MAPK14. The protein is Dual specificity mitogen-activated protein kinase kinase 4 (MAP2K4) of Homo sapiens (Human).